The chain runs to 518 residues: Probable inorganic carbon transporter subunit DabB (518 aa).

The next 13 membrane-spanning stretches (helical) occupy residues 3–23 (MQWVGASMMLLIPVLFFLGSL), 37–57 (ISLLGLFLSMFLGIAVYFEWV), 65–85 (WVGVSKMSLVMLGLVCFIAFV), 114–134 (CVVTVIISNHMLVLMVAWIAI), 165–185 (AEACLLGAILILYYEHGTWFI), 207–227 (MLLALAALVKCAQLPLHGWLI), 242–262 (AGIINLGGYLLIIFAPLIVLS), 264–284 (MAQWILLIVGGITTVLAALVM), 302–322 (MGLMLVECALGLFELALLHLV), 358–378 (WWFAGIMSAAMVVGLIWLADL), 379–399 (SGPYSPWLLFAIAVTLLIAER), 403–423 (LTSSSVIGMVGLGVVLLVVYT), and 442–462 (WKGDLWIGFLLVMFMVGYFLL).

It belongs to the inorganic carbon transporter (TC 9.A.2) DabB family. In terms of assembly, forms a complex with DabA.

Its subcellular location is the cell inner membrane. Intracellular DIC accumulation is sensitive to CCCP (carbonyl cyanide-m-chlorophenylhydrazone) and DCCD (N,N-dicyclohexylcarbodiimide) and therefore likely driven by either proton gradient, ATP, or both. Functionally, part of an energy-coupled inorganic carbon pump involved in transport of dissolved inorganic carbon (DIC) with downstream gene dabA (Tcr_0854); has been suggested to be a proton-DIC symporter. The protein is Probable inorganic carbon transporter subunit DabB of Hydrogenovibrio crunogenus (strain DSM 25203 / XCL-2) (Thiomicrospira crunogena).